Consider the following 353-residue polypeptide: Phospho-furanose lactonase (353 aa).

Positions 25, 27, 153, 186, and 214 each coordinate Zn(2+). Lysine 153 is modified (N6-carboxylysine). Lysine 244–tyrosine 245 is a binding site for substrate. Aspartate 272 lines the Zn(2+) pocket. Arginine 275 to tyrosine 278 is a binding site for substrate.

The protein belongs to the metallo-dependent hydrolases superfamily. Phosphotriesterase family. Zn(2+) serves as cofactor.

It catalyses the reaction a 1,4-lactone + H2O = a 4-hydroxyacid + H(+). The catalysed reaction is D-xylono-1,4-lactone 5-phosphate + H2O = 5-phospho-D-xylonate + H(+). It carries out the reaction L-arabino-1,4-lactone 5-phosphate + H2O = 5-phospho-L-arabinonate + H(+). In terms of biological role, catalyzes the hydrolysis of D-xylono-1,4-lactone-5-phosphate and L-arabino-1,4-lactone-5-phosphate. Also able to hydrolyze carboxy 1,4-lactones. This is Phospho-furanose lactonase from Mycoplasmopsis agalactiae (strain NCTC 10123 / CIP 59.7 / PG2) (Mycoplasma agalactiae).